The sequence spans 261 residues: Probable electron transfer flavoprotein subunit beta (261 aa).

N-acetylserine is present on S2.

Belongs to the ETF beta-subunit/FixA family. As to quaternary structure, heterodimer of an alpha and a beta subunit. Interacts with YFH1. FAD is required as a cofactor. The cofactor is AMP.

It localises to the mitochondrion matrix. Its function is as follows. The electron transfer flavoprotein serves as a specific electron acceptor for several dehydrogenases, including five acyl-CoA dehydrogenases, glutaryl-CoA and sarcosine dehydrogenase. It transfers the electrons to the main mitochondrial respiratory chain via ETF-ubiquinone oxidoreductase (ETF dehydrogenase). This chain is Probable electron transfer flavoprotein subunit beta (CIR1), found in Saccharomyces cerevisiae (strain ATCC 204508 / S288c) (Baker's yeast).